We begin with the raw amino-acid sequence, 612 residues long: Serine/threonine-protein kinase Nek1 (612 aa).

Residues 4 to 258 enclose the Protein kinase domain; that stretch reads YEFLEQIGKG…ASDLLRHPHL (255 aa). Residues 10 to 18 and K33 each bind ATP; that span reads IGKGSFGSA. Catalysis depends on D129, which acts as the Proton acceptor. Polar residues predominate over residues 503-513; that stretch reads ISDGSSSSDQN. The segment at 503 to 534 is disordered; it reads ISDGSSSSDQNATAGASSHTTSSSSRRCRFDP. The segment covering 514-527 has biased composition (low complexity); that stretch reads ATAGASSHTTSSSS.

The protein belongs to the protein kinase superfamily. NEK Ser/Thr protein kinase family. NIMA subfamily.

The enzyme catalyses L-seryl-[protein] + ATP = O-phospho-L-seryl-[protein] + ADP + H(+). It carries out the reaction L-threonyl-[protein] + ATP = O-phospho-L-threonyl-[protein] + ADP + H(+). May be involved in plant development processes. The sequence is that of Serine/threonine-protein kinase Nek1 (NEK1) from Arabidopsis thaliana (Mouse-ear cress).